The primary structure comprises 336 residues: Secreted effector protein SifA (336 aa).

The interval 1–330 (MPITIGNGFL…LHVRSEQQSG (330 aa)) is interaction with host PLEKHM2.

This sequence belongs to the Sif family. In terms of assembly, interacts with host PLEKHM2. Interacts with SseJ; the interaction is indirect.

The protein resides in the secreted. The protein localises to the host cytoplasm. It localises to the host cell membrane. Functionally, effector proteins function to alter host cell physiology and promote bacterial survival in host tissues. This protein is required for endosomal tubulation and formation of Salmonella-induced filaments (Sifs), which are filamentous structures containing lysosomal membrane glycoproteins within epithelial cells. Sif formation is concomitant with intracellular bacterial replication. The polypeptide is Secreted effector protein SifA (sifA) (Salmonella typhimurium (strain LT2 / SGSC1412 / ATCC 700720)).